An 880-amino-acid polypeptide reads, in one-letter code: Leucine--tRNA ligase (880 aa).

Positions 49 to 59 (PYPSGRIHMGH) match the 'HIGH' region motif. The short motif at 638–642 (KMSKS) is the 'KMSKS' region element. Lysine 641 is an ATP binding site.

Belongs to the class-I aminoacyl-tRNA synthetase family.

Its subcellular location is the cytoplasm. It catalyses the reaction tRNA(Leu) + L-leucine + ATP = L-leucyl-tRNA(Leu) + AMP + diphosphate. This is Leucine--tRNA ligase from Bartonella quintana (strain Toulouse) (Rochalimaea quintana).